Here is a 173-residue protein sequence, read N- to C-terminus: Mitochondrial holo-[acyl-carrier-protein] synthase (173 aa).

This sequence belongs to the P-Pant transferase superfamily. AcpS family.

It is found in the mitochondrion. The catalysed reaction is apo-[ACP] + CoA = holo-[ACP] + adenosine 3',5'-bisphosphate + H(+). Functionally, transfers the 4'-phosphopantetheine moiety from coenzyme A to a Ser of mitochondrial acyl-carrier-protein. The protein is Mitochondrial holo-[acyl-carrier-protein] synthase (PPT2) of Saccharomyces cerevisiae (strain ATCC 204508 / S288c) (Baker's yeast).